Consider the following 115-residue polypeptide: Large ribosomal subunit protein uL18 (115 aa).

The protein belongs to the universal ribosomal protein uL18 family. In terms of assembly, part of the 50S ribosomal subunit; part of the 5S rRNA/L5/L18/L25 subcomplex. Contacts the 5S and 23S rRNAs.

Functionally, this is one of the proteins that bind and probably mediate the attachment of the 5S RNA into the large ribosomal subunit, where it forms part of the central protuberance. The sequence is that of Large ribosomal subunit protein uL18 from Ruthia magnifica subsp. Calyptogena magnifica.